Consider the following 173-residue polypeptide: Translationally-controlled tumor protein homolog (173 aa).

In terms of domain architecture, TCTP spans 1-173 (MIIYKDILTG…WKHGLEEYKV (173 aa)).

It belongs to the TCTP family.

It is found in the cytoplasm. The protein resides in the cytoskeleton. Functionally, involved in protein synthesis. Involved in microtubule stabilization. The polypeptide is Translationally-controlled tumor protein homolog (Aspergillus oryzae (strain ATCC 42149 / RIB 40) (Yellow koji mold)).